The following is a 341-amino-acid chain: MRVGVLTGGGDCPGLNAVIRAVVRKGIEVHGWDFVGFRNGWNGPLTGDSRPLGLNDVEDILTRGGTILRSSRTNPYKVEGGVDKIKQVLADQGVDALIAIGGEDTLGVAKRLTDDGIGVVGVPKTIDNDLGATDYTFGFDTAVSIATEAIDRLHTTAESHHRALVVEVMGRHAGWIALHSGLAGGASVILVPERHFNVDQVVSWVERRFEKEFAPIIVVAEGALPEGGEEKLLTGEKDAFGHVRLGGIGTWLADEIAHRTGKESRAVVLGHVQRGGTPTAYDRVLATRFGLNAVDAVADGDFGVMVALKGTDIVRVKLSEATAELKTVPVERYQEAEVFFG.

Gly-10 is a binding site for diphosphate. Glu-103 lines the Mg(2+) pocket. Residues 125–127, Arg-162, 169–171, Glu-221, Arg-265, and 271–274 contribute to the substrate site; these read TID, MGR, and HVQR. The active-site Proton acceptor is Asp-127.

The protein belongs to the phosphofructokinase type A (PFKA) family. Mixed-substrate PFK group III subfamily. As to quaternary structure, homodimer or homotetramer. Mg(2+) is required as a cofactor.

It localises to the cytoplasm. It catalyses the reaction beta-D-fructose 6-phosphate + diphosphate = beta-D-fructose 1,6-bisphosphate + phosphate + H(+). The protein operates within carbohydrate degradation; glycolysis; D-glyceraldehyde 3-phosphate and glycerone phosphate from D-glucose: step 3/4. Its activity is regulated as follows. Non-allosteric. Its function is as follows. Catalyzes the phosphorylation of D-fructose 6-phosphate, the first committing step of glycolysis. Uses inorganic phosphate (PPi) as phosphoryl donor instead of ATP like common ATP-dependent phosphofructokinases (ATP-PFKs), which renders the reaction reversible, and can thus function both in glycolysis and gluconeogenesis. Consistently, PPi-PFK can replace the enzymes of both the forward (ATP-PFK) and reverse (fructose-bisphosphatase (FBPase)) reactions. The sequence is that of Pyrophosphate--fructose 6-phosphate 1-phosphotransferase from Amycolatopsis mediterranei (strain S699) (Nocardia mediterranei).